Reading from the N-terminus, the 494-residue chain is Alpha-amylase-related protein (494 aa).

Residues 1 to 20 (MIKFALALTLCLAGASLSLA) form the signal peptide. Gln21 is modified (pyrrolidone carboxylic acid). Cys48 and Cys104 are disulfide-bonded. Ca(2+)-binding residues include Asn118, Gln169, and Asp178. The cysteines at positions 157 and 171 are disulfide-linked. Arg206 contacts chloride. Asp208 serves as the catalytic Nucleophile. His212 serves as a coordination point for Ca(2+). Glu245 functions as the Proton donor in the catalytic mechanism. Positions 308 and 343 each coordinate chloride. Cystine bridges form between Cys376/Cys382, Cys418/Cys441, and Cys448/Cys460.

The protein belongs to the glycosyl hydrolase 13 family. In terms of assembly, monomer. Requires Ca(2+) as cofactor. It depends on chloride as a cofactor.

It is found in the secreted. The enzyme catalyses Endohydrolysis of (1-&gt;4)-alpha-D-glucosidic linkages in polysaccharides containing three or more (1-&gt;4)-alpha-linked D-glucose units.. In Drosophila bocqueti (Fruit fly), this protein is Alpha-amylase-related protein (Amyrel).